We begin with the raw amino-acid sequence, 402 residues long: Caspase-1 (402 aa).

Residues Met1–Ser91 enclose the CARD domain. A propeptide spanning residues Met1–Leu118 is cleaved from the precursor. Active-site residues include His236 and Cys284. A propeptide spanning residues Ser297–Asp314 is cleaved from the precursor. Residue Ser301 is modified to Phosphoserine.

It belongs to the peptidase C14A family. Heterotetramer that consists of two anti-parallel arranged heterodimers, each one formed by a 20 kDa (Caspase-1 subunit p20) and a 10 kDa (Caspase-1 subunit p10) subunit. May be a component of the inflammasome, a protein complex which also includes PYCARD, CARD8 and NLRP2 and whose function would be the activation of pro-inflammatory caspases. Component of the AIM2 PANoptosome complex, a multiprotein complex that drives inflammatory cell death (PANoptosis). Both the p10 and p20 subunits interact with MEFV. Interacts with CARD17P/INCA and CARD18. Interacts with SERPINB1; this interaction regulates CASP1 activity. As to quaternary structure, heterotetramer that consists of two anti-parallel arranged heterodimers, each one formed by a 20 kDa (Caspase-1 subunit p20) and a 10 kDa (Caspase-1 subunit p10) subunit. Post-translationally, the two subunits are derived from the precursor sequence by an autocatalytic mechanism. In terms of processing, ubiquitinated via 'Lys-11'-linked polyubiquitination. Deubiquitinated by USP8.

It localises to the cytoplasm. It is found in the cell membrane. It catalyses the reaction Strict requirement for an Asp residue at position P1 and has a preferred cleavage sequence of Tyr-Val-Ala-Asp-|-.. Thiol protease involved in a variety of inflammatory processes by proteolytically cleaving other proteins, such as the precursors of the inflammatory cytokines interleukin-1 beta (IL1B) and interleukin 18 (IL18) as well as the pyroptosis inducer Gasdermin-D (GSDMD), into active mature peptides. Plays a key role in cell immunity as an inflammatory response initiator: once activated through formation of an inflammasome complex, it initiates a pro-inflammatory response through the cleavage of the two inflammatory cytokines IL1B and IL18, releasing the mature cytokines which are involved in a variety of inflammatory processes. Cleaves a tetrapeptide after an Asp residue at position P1. Also initiates pyroptosis, a programmed lytic cell death pathway, through cleavage of GSDMD. In contrast to cleavage of interleukin IL1B, recognition and cleavage of GSDMD is not strictly dependent on the consensus cleavage site but depends on an exosite interface on CASP1 that recognizes and binds the Gasdermin-D, C-terminal (GSDMD-CT) part. Cleaves and activates CASP7 in response to bacterial infection, promoting plasma membrane repair. Upon inflammasome activation, during DNA virus infection but not RNA virus challenge, controls antiviral immunity through the cleavage of CGAS, rendering it inactive. In apoptotic cells, cleaves SPHK2 which is released from cells and remains enzymatically active extracellularly. This is Caspase-1 (Casp1) from Rattus norvegicus (Rat).